We begin with the raw amino-acid sequence, 545 residues long: Toxin BC_0920 (545 aa).

The region spanning 1-217 is the LXG domain; sequence MSLNMYLGEV…ARQAANSIEE (217 aa).

This sequence in the N-terminal section; belongs to the LXG family. It in the C-terminal section; belongs to the bacterial EndoU family. In terms of assembly, probably interacts with cognate immunity protein BC_0921. The interaction inhibits the toxic activity of BC_0921.

The protein resides in the secreted. In terms of biological role, toxic component of an LXG toxin-immunity module. The C-terminus (residues 322-545) has RNase activity in E.coli which is neutralized by cognate immunity protein BC_0921, but not by immunity proteins specific to other toxins with the LXG domain. Degrades 5S rRNA and several tRNAs in vitro; cleavage is endonucleolytic within the anticodon loop for tRNA(GAU-Ile) and tRNA(UUC-Glu) but total for 5S rRNA and at least one other tRNA. RNase activity is suppressed by cognate immunity protein BC_0921. This is Toxin BC_0920 from Bacillus cereus (strain ATCC 14579 / DSM 31 / CCUG 7414 / JCM 2152 / NBRC 15305 / NCIMB 9373 / NCTC 2599 / NRRL B-3711).